A 186-amino-acid polypeptide reads, in one-letter code: Glycerol-3-phosphate acyltransferase 1 (186 aa).

Transmembrane regions (helical) follow at residues 9–29 (MQFL…AYIV), 58–78 (GYFV…VSIA), 85–105 (STFV…PVLF), 121–141 (IAFD…FYLI), and 161–181 (ILYS…VLIL).

This sequence belongs to the PlsY family. In terms of assembly, probably interacts with PlsX.

Its subcellular location is the cell membrane. It catalyses the reaction an acyl phosphate + sn-glycerol 3-phosphate = a 1-acyl-sn-glycero-3-phosphate + phosphate. It participates in lipid metabolism; phospholipid metabolism. In terms of biological role, catalyzes the transfer of an acyl group from acyl-phosphate (acyl-PO(4)) to glycerol-3-phosphate (G3P) to form lysophosphatidic acid (LPA). This enzyme utilizes acyl-phosphate as fatty acyl donor, but not acyl-CoA or acyl-ACP. In Bacillus cereus (strain ZK / E33L), this protein is Glycerol-3-phosphate acyltransferase 1.